An 87-amino-acid polypeptide reads, in one-letter code: Putative regulatory protein GWCH70_1057 (87 aa).

Belongs to the RemA family.

The polypeptide is Putative regulatory protein GWCH70_1057 (Geobacillus sp. (strain WCH70)).